The sequence spans 641 residues: Soluble starch synthase 1, chloroplastic/amyloplastic (641 aa).

ADP-alpha-D-glucose is bound at residue Lys145.

It belongs to the glycosyltransferase 1 family. Bacterial/plant glycogen synthase subfamily. In terms of tissue distribution, high expression in leaves and very low in tubers.

It localises to the plastid. The protein resides in the chloroplast. The protein localises to the amyloplast. The enzyme catalyses [(1-&gt;4)-alpha-D-glucosyl](n) + ADP-alpha-D-glucose = [(1-&gt;4)-alpha-D-glucosyl](n+1) + ADP + H(+). It functions in the pathway glycan biosynthesis; starch biosynthesis. Its function is as follows. Plays a minor role in starch synthesis in storage organs (tubers), but may contribute to the deposition of transient starch in chloroplasts of leaves. This is Soluble starch synthase 1, chloroplastic/amyloplastic from Solanum tuberosum (Potato).